The primary structure comprises 65 residues: Large ribosomal subunit protein bL35 (65 aa).

Belongs to the bacterial ribosomal protein bL35 family.

The sequence is that of Large ribosomal subunit protein bL35 from Desulforapulum autotrophicum (strain ATCC 43914 / DSM 3382 / VKM B-1955 / HRM2) (Desulfobacterium autotrophicum).